Consider the following 445-residue polypeptide: tRNA-2-methylthio-N(6)-dimethylallyladenosine synthase (445 aa).

An MTTase N-terminal domain is found at 9–125 (LKYRILTYGC…LPYLIARAKE (117 aa)). Residues cysteine 18, cysteine 54, cysteine 88, cysteine 162, cysteine 166, and cysteine 169 each coordinate [4Fe-4S] cluster. In terms of domain architecture, Radical SAM core spans 148 to 378 (RKPGLSAFVN…NRRQYQIATE (231 aa)). The region spanning 381–444 (QELQGSIQEV…TFSLFGEIFN (64 aa)) is the TRAM domain.

It belongs to the methylthiotransferase family. MiaB subfamily. Monomer. [4Fe-4S] cluster is required as a cofactor.

It localises to the cytoplasm. The enzyme catalyses N(6)-dimethylallyladenosine(37) in tRNA + (sulfur carrier)-SH + AH2 + 2 S-adenosyl-L-methionine = 2-methylsulfanyl-N(6)-dimethylallyladenosine(37) in tRNA + (sulfur carrier)-H + 5'-deoxyadenosine + L-methionine + A + S-adenosyl-L-homocysteine + 2 H(+). Functionally, catalyzes the methylthiolation of N6-(dimethylallyl)adenosine (i(6)A), leading to the formation of 2-methylthio-N6-(dimethylallyl)adenosine (ms(2)i(6)A) at position 37 in tRNAs that read codons beginning with uridine. In Syntrophomonas wolfei subsp. wolfei (strain DSM 2245B / Goettingen), this protein is tRNA-2-methylthio-N(6)-dimethylallyladenosine synthase.